The following is a 99-amino-acid chain: Transposase InsE for insertion sequence IS3A (99 aa).

Residues 1-21 form a disordered region; it reads MTKTVSTSKKPRKQHSPEFRS.

This sequence belongs to the transposase 8 family.

Involved in the transposition of the insertion sequence IS3. The sequence is that of Transposase InsE for insertion sequence IS3A (insE1) from Escherichia coli (strain K12).